A 916-amino-acid chain; its full sequence is MVQKESQAALEERESERNANPASVSGASLEPSAAPAPGEDNPSGAGAAAGTGAAGGARRFLCGVVEGFYGRPWVMEQRKELFRRLQKWELNTYLYAPKDDYKHRMFWREMYSVEEAEQLMTLISAAREYEIEFIYAISPGLDITFSNPKEVSTLKRKLDQVSQFGCRSFALLFDDIDHNMCAADKEVFSSFAHAQVSITNEIYQYLGEPETFLFCPTEYCGTFCYPSVSQSPYLRTVGEKLLPGIEVLWTGPKVVSKEIPVESIEEVSKIIKRAPVIWDNIHANDYDQKRLFLGPYKGRSTELIPRLKGVLTNPNCEFEANYVAIHTLATWYKSNMNGVRKDVVMTDSEDSTVSIQIKLENEGSDEDIETDVLYSPQMALKLALTEWLQEFGVPHQYSSRQVAHSGAKTSVVDGTPLVAAPSLNATTVVTTVYQEPIMSQGAALSGEPSALTKEEEKKQPDEEPMDMVVEKQEESEHKSDNQILTEIVEAKMAEELKPMDTDKESIAESKSPEMSMQEDCINDIAPMQTDEQANKEQFVPGPNEKPLYAAEPVTLEDLQLLADLFYLPYEHGPKGAQMLREFQWLRANSSVVSVNCKGKDSEKIEEWRSRAAKFEEMCALVMGMFTRLSNCANRTILYDMYSYVWDIKSIMSMVKSFVQWLGCRSHSSAQFLIGDQEPWAFRGGLAGEFQRLLPIDGANDLFFQPPPLTPTSKVYTIRPYFPKDEASVYKICREMYDDGVGLPFQSQPDLIGDKLVGGLLSLSLDYCFVLEDEDGICGYALGTVDVTPFIKKCKISWIPFMQEKYTKPNGDKELSEAEKIMLSFHEEQEVLPETFLANFPSLIKMDIHKKVTDPSVAKSMMACLLSSLKANGSRGAFCEVRPDDKRILEFYSKLGCFEIAKMEGFPKDVVILGRSL.

Residues 1-50 (MVQKESQAALEERESERNANPASVSGASLEPSAAPAPGEDNPSGAGAAAG) are disordered. The GH84 domain occupies 60–336 (FLCGVVEGFY…TLATWYKSNM (277 aa)). 3 residues coordinate a protein: Gly67, Lys98, and Asp174. Asp175 (proton donor) is an active-site residue. A protein-binding positions include Tyr219, 278 to 280 (WDN), Asp285, and Asn313. Residue Ser364 is modified to Phosphoserine. The interval 440–480 (QGAALSGEPSALTKEEEKKQPDEEPMDMVVEKQEESEHKSD) is disordered. Basic and acidic residues-rich tracts occupy residues 452 to 461 (TKEEEKKQPD) and 468 to 480 (VVEKQEESEHKSD).

Belongs to the glycosyl hydrolase 84 family. Monomer. Interacts with CLOCK. Post-translationally, proteolytically cleaved by caspase-3 during apoptosis. The fragments interact with each other; cleavage does not decrease enzyme activity. In terms of tissue distribution, detected in spleen (at protein level). Ubiquitous. Expressed at highest levels in the brain and spleen.

It is found in the nucleus. It localises to the cytoplasm. It carries out the reaction 3-O-(N-acetyl-beta-D-glucosaminyl)-L-seryl-[protein] + H2O = N-acetyl-D-glucosamine + L-seryl-[protein]. The enzyme catalyses 3-O-(N-acetyl-beta-D-glucosaminyl)-L-threonyl-[protein] + H2O = L-threonyl-[protein] + N-acetyl-D-glucosamine. With respect to regulation, inhibited by Cu(2+), Hg(2+), Cd(2+) and Zn(2+) at 1 mM. Not inhibited by Co(2+), Mg(2+), Ca(2+), Mn(2+), Fe(3+) and EDTA. Also inhibited by sodium chloride at 1M and 2-amino-2-hydroxymethyl-1,3-propanediol (trishydroxymethylaminomethane) at 75 mM. Cleaves GlcNAc but not GalNAc from O-glycosylated proteins. Deglycosylates a large and diverse number of proteins, such as CRYAB, ELK1, GSDMD, LMNB1 and TAB1. Can use p-nitrophenyl-beta-GlcNAc and 4-methylumbelliferone-GlcNAc as substrates but not p-nitrophenyl-beta-GalNAc or p-nitrophenyl-alpha-GlcNAc (in vitro). Does not bind acetyl-CoA and does not have histone acetyltransferase activity. In terms of biological role, lacks enzyme activity. This Rattus norvegicus (Rat) protein is Protein O-GlcNAcase.